A 312-amino-acid polypeptide reads, in one-letter code: tRNA pseudouridine synthase B (312 aa).

Asp47 serves as the catalytic Nucleophile.

It belongs to the pseudouridine synthase TruB family. Type 1 subfamily.

The enzyme catalyses uridine(55) in tRNA = pseudouridine(55) in tRNA. In terms of biological role, responsible for synthesis of pseudouridine from uracil-55 in the psi GC loop of transfer RNAs. The chain is tRNA pseudouridine synthase B from Vibrio cholerae serotype O1 (strain M66-2).